A 1086-amino-acid chain; its full sequence is Tudor domain-containing protein 7 (1086 aa).

HTH OST-type domains are found at residues 3 to 76 (EADL…YAVA) and 222 to 291 (KMDE…YPAR). Over residues 295–306 (PLKSDQDPEKEL) the composition is skewed to basic and acidic residues. The segment at 295–324 (PLKSDQDPEKELPPPPPAPKQEVPSQGSPA) is disordered. Residues 325-394 (VMPDVKEKVA…TQKAILYAKL (70 aa)) enclose the HTH OST-type 3 domain. 2 Tudor domains span residues 501–558 (TVHV…FCSL) and 691–748 (LPFC…FLQE). The segment at 844–866 (AASSPGNRNGGTPAPGSPAESLR) is disordered. Serine 847 is modified (phosphoserine). Residues 849–1086 (GNRNGGTPAP…QYLLELSKVN (238 aa)) are interaction with CDK17. The segment at 881-1086 (TSSFSLEELP…QYLLELSKVN (206 aa)) is interaction with CABLES1.

It belongs to the TDRD7 family. In terms of assembly, found in a mRNP complex, at least composed of TDRD1, TDRD6, TDRD7 and DDX4. Found in a complex containing CABLES1, CDK16 and CDK17. Interacts with CABLES1, CDK17 and PIWIL1. In terms of tissue distribution, mainly expressed in testis. Expressed in spermatogonia, spermatocytes and round spermatids (at protein level). Also expressed in the developing lens.

The protein resides in the cytoplasm. In terms of biological role, component of specific cytoplasmic RNA granules involved in post-transcriptional regulation of specific genes: probably acts by binding to specific mRNAs and regulating their translation. Required for lens transparency during lens development, by regulating translation of genes such as CRYBB3 and HSPB1 in the developing lens. Also required during spermatogenesis. The protein is Tudor domain-containing protein 7 (Tdrd7) of Mus musculus (Mouse).